The primary structure comprises 286 residues: Small ribosomal subunit protein uS3 (286 aa).

Positions 39 to 107 (VREYLKKKLA…PVHVNIEEIR (69 aa)) constitute a KH type-2 domain. A disordered region spans residues 213 to 286 (QAGAGTAAPQ…KPGVNDAAAS (74 aa)). The segment covering 241–262 (GRADARSDGKAGEKKGPRKSDN) has biased composition (basic and acidic residues).

This sequence belongs to the universal ribosomal protein uS3 family. As to quaternary structure, part of the 30S ribosomal subunit. Forms a tight complex with proteins S10 and S14.

Functionally, binds the lower part of the 30S subunit head. Binds mRNA in the 70S ribosome, positioning it for translation. This Nitrosospira multiformis (strain ATCC 25196 / NCIMB 11849 / C 71) protein is Small ribosomal subunit protein uS3.